The following is a 352-amino-acid chain: C-C chemokine receptor type 5 (352 aa).

The Extracellular portion of the chain corresponds to 1-30; the sequence is MDYQVSSPTYDIDYYTSEPCQKIKVKQIAA. Position 3 is a sulfotyrosine (Tyr3). O-linked (GalNAc...) serine glycosylation is found at Ser6 and Ser7. Tyr10, Tyr14, and Tyr15 each carry sulfotyrosine. Intrachain disulfides connect Cys20–Cys269 and Cys101–Cys178. The chain crosses the membrane as a helical span at residues 31-58; it reads RLLPPLYSLVFIFGFVGNILVVLILINC. Residues 59-68 lie on the Cytoplasmic side of the membrane; sequence KRLKSMTDIY. Residues 69-89 form a helical membrane-spanning segment; the sequence is LLNLAISDLLFLLTVPFWAHY. The Extracellular segment spans residues 90-102; that stretch reads AAAQWDFGNTMCQ. A helical transmembrane segment spans residues 103–124; that stretch reads LLTGLYFIGFFSGIFFIILLTI. Residues 125–141 are Cytoplasmic-facing; that stretch reads DRYLAIVHAVFALKART. Residues 142-166 form a helical membrane-spanning segment; the sequence is VTFGVVTSVITWVVAVFASLPRIIF. At 167-198 the chain is on the extracellular side; sequence TRSQREGLHYTCSSHFPYSQYQFWKNFQTLKI. The helical transmembrane segment at 199–218 threads the bilayer; sequence VILGLVLPLLVMVICYSGIL. Over 219-235 the chain is Cytoplasmic; sequence KTLLRCRNDKKRHRAVR. A helical membrane pass occupies residues 236–260; that stretch reads LIFTIMIVYFLFWAPYNIVLLLNTF. The Extracellular segment spans residues 261-277; that stretch reads QEFFGLNNCSSSNRLDQ. Residues 278–301 traverse the membrane as a helical segment; the sequence is AMQVTETLGMTHCCINPIIYAFVG. At 302 to 352 the chain is on the cytoplasmic side; the sequence is EKFRNYLLVFFQKHIAKRFCKCCSIFQQDAPERASSVYTRSTGEQETSVGL. S-palmitoyl cysteine attachment occurs at residues Cys321, Cys323, and Cys324. Residues Ser336, Ser337, Ser342, and Ser349 each carry the phosphoserine; by BARK1 modification.

This sequence belongs to the G-protein coupled receptor 1 family. In terms of assembly, interacts with PRAF2. Efficient ligand binding to CCL3/MIP-1alpha and CCL4/MIP-1beta requires sulfation, O-glycosylation and sialic acid modifications. Glycosylation on Ser-6 is required for efficient binding of CCL4. Interacts with GRK2. Interacts with ARRB1 and ARRB2. Interacts with CNIH4. Interacts with S100A4; this interaction stimulates T-lymphocyte chemotaxis. Sulfated on at least 2 of the N-terminal tyrosines. Sulfation is required for efficient binding of the chemokines, CCL3 and CCL4. In terms of processing, palmitoylation in the C-terminal is important for cell surface expression. Post-translationally, phosphorylation on serine residues in the C-terminal is stimulated by binding CC chemokines especially by APO-RANTES. O-glycosylated, but not N-glycosylated. Ser-6 appears to be the major site even if Ser-7 may be also O-glycosylated. Also sialylated glycans present which contribute to chemokine binding. Thr-16 and Ser-17 may also be glycosylated and, if so, with small moieties such as a T-antigen.

It is found in the cell membrane. Its function is as follows. Receptor for a number of inflammatory CC-chemokines including CCL3/MIP-1-alpha, CCL4/MIP-1-beta and RANTES and subsequently transduces a signal by increasing the intracellular calcium ion level. May play a role in the control of granulocytic lineage proliferation or differentiation. Participates in T-lymphocyte migration to the infection site by acting as a chemotactic receptor. This Chlorocebus sabaeus (Green monkey) protein is C-C chemokine receptor type 5 (CCR5).